The sequence spans 251 residues: Probable phosphatase Sputw3181_2734 (251 aa).

Zn(2+) contacts are provided by histidine 8, histidine 10, histidine 16, histidine 41, glutamate 74, histidine 102, histidine 132, aspartate 193, and histidine 195.

Belongs to the PHP family. Zn(2+) is required as a cofactor.

The polypeptide is Probable phosphatase Sputw3181_2734 (Shewanella sp. (strain W3-18-1)).